The primary structure comprises 320 residues: MSNESSKKQSSKKALFDPVSFSKDLLAGGVAAAVSKTAVAPIERVKLLLQVQASSKQISPEARYKGMLDCLVRIPREQGFLSYWRGNLANVIRYFPTQALNFAFKDKYKELFMSGVNKEKQFWRWFLANLASGGAAGATSLCVVYPLDFARTRLGVDIGKGPEQRQFTGLGDCIMKIAKSDGLIGLYQGFGVSVQGIIVYRASYFGAYDTVKGLLPKPKETPFLVSFIIAQIVTTCSGILSYPFDTVRRRMMMQSGESDRQYKGTIDCFLKIYRHEGVPAFFRGAFSNILRGTGGALVLVLYDKIKEFLNIDVGGSSSGD.

Topologically, residues 1 to 20 (MSNESSKKQSSKKALFDPVS) are mitochondrial intermembrane. One copy of the Solcar 1 repeat lies at 19–111 (VSFSKDLLAG…FAFKDKYKEL (93 aa)). A helical transmembrane segment spans residues 21–50 (FSKDLLAGGVAAAVSKTAVAPIERVKLLLQ). Topologically, residues 51–87 (VQASSKQISPEARYKGMLDCLVRIPREQGFLSYWRGN) are mitochondrial matrix. Residues 88 to 112 (LANVIRYFPTQALNFAFKDKYKELF) traverse the membrane as a helical segment. Residues R93 and K105 each coordinate ADP. Topologically, residues 113-122 (MSGVNKEKQF) are mitochondrial intermembrane. A helical transmembrane segment spans residues 123-143 (WRWFLANLASGGAAGATSLCV). Solcar repeat units lie at residues 124–214 (RWFL…VKGL) and 221–308 (TPFL…IKEF). Over 144–191 (VYPLDFARTRLGVDIGKGPEQRQFTGLGDCIMKIAKSDGLIGLYQGFG) the chain is Mitochondrial matrix. A helical transmembrane segment spans residues 192 to 212 (VSVQGIIVYRASYFGAYDTVK). Residues 213–223 (GLLPKPKETPF) are Mitochondrial intermembrane-facing. The chain crosses the membrane as a helical span at residues 224 to 244 (LVSFIIAQIVTTCSGILSYPF). Residues 245-284 (DTVRRRMMMQSGESDRQYKGTIDCFLKIYRHEGVPAFFRG) lie on the Mitochondrial matrix side of the membrane. R248 contacts ADP. The tract at residues 248–253 (RRRMMM) is important for transport activity. Residues 248–253 (RRRMMM) carry the Nucleotide carrier signature motif motif. A helical transmembrane segment spans residues 285-302 (AFSNILRGTGGALVLVLY). Topologically, residues 303 to 320 (DKIKEFLNIDVGGSSSGD) are mitochondrial intermembrane.

This sequence belongs to the mitochondrial carrier (TC 2.A.29) family. As to quaternary structure, monomer. In terms of tissue distribution, specifically expressed in undifferentiated embryonic stem cells and germ cells. Expression is down-regulated after embryonic stem cells differentiation. In adults, only expressed in developing gametes in testis. In testis, expressed at higher level in spermatocytes. Expression is probably associated with entry of the male germ cells into meiosis. Expressed at very low level in Sertoli cells.

The protein localises to the mitochondrion inner membrane. The protein resides in the membrane. It localises to the cell projection. Its subcellular location is the cilium. It is found in the flagellum membrane. The catalysed reaction is ADP(in) + ATP(out) = ADP(out) + ATP(in). The enzyme catalyses dATP(out) + ADP(in) = dATP(in) + ADP(out). It catalyses the reaction dADP(in) + ADP(out) = dADP(out) + ADP(in). It carries out the reaction H(+)(in) = H(+)(out). Its activity is regulated as follows. The matrix-open state (m-state) is inhibited by the membrane-permeable bongkrekic acid (BKA). The cytoplasmic-open state (c-state) is inhibited by the membrane-impermeable toxic inhibitor carboxyatractyloside (CATR). Proton transporter activity is inhibited by ADP:ATP antiporter activity. Its function is as follows. ADP:ATP antiporter that mediates import of ADP into the mitochondrial matrix for ATP synthesis, and export of ATP out to fuel the cell. Cycles between the cytoplasmic-open state (c-state) and the matrix-open state (m-state): operates by the alternating access mechanism with a single substrate-binding site intermittently exposed to either the cytosolic (c-state) or matrix (m-state) side of the inner mitochondrial membrane. Specifically required during spermatogenesis, probably to mediate ADP:ATP exchange in spermatocytes. Large ATP supplies from mitochondria may be critical for normal progression of spermatogenesis during early stages of meiotic prophase I, including DNA double-strand break repair and chromosomal synapsis. In addition to its ADP:ATP antiporter activity, also involved in mitochondrial uncoupling and mitochondrial permeability transition pore (mPTP) activity. Plays a role in mitochondrial uncoupling by acting as a proton transporter: proton transport uncouples the proton flows via the electron transport chain and ATP synthase to reduce the efficiency of ATP production and cause mitochondrial thermogenesis. Proton transporter activity is inhibited by ADP:ATP antiporter activity, suggesting that SLC25A31/ANT4 acts as a master regulator of mitochondrial energy output by maintaining a delicate balance between ATP production (ADP:ATP antiporter activity) and thermogenesis (proton transporter activity). Proton transporter activity requires free fatty acids as cofactor, but does not transport it. Among nucleotides, may also exchange ADP for dATP and dADP. Also plays a key role in mPTP opening, a non-specific pore that enables free passage of the mitochondrial membranes to solutes of up to 1.5 kDa, and which contributes to cell death. It is however unclear if SLC25A31/ANT4 constitutes a pore-forming component of mPTP or regulates it. This chain is ADP/ATP translocase 4, found in Mus musculus (Mouse).